The primary structure comprises 40 residues: Photosystem II reaction center protein J (40 aa).

Residues 8-28 form a helical membrane-spanning segment; the sequence is IPLWVVATIAGLGVITVVGIF.

It belongs to the PsbJ family. In terms of assembly, PSII is composed of 1 copy each of membrane proteins PsbA, PsbB, PsbC, PsbD, PsbE, PsbF, PsbH, PsbI, PsbJ, PsbK, PsbL, PsbM, PsbT, PsbX, PsbY, PsbZ, Psb30/Ycf12, peripheral proteins PsbO, CyanoQ (PsbQ), PsbU, PsbV and a large number of cofactors. It forms dimeric complexes.

The protein localises to the cellular thylakoid membrane. One of the components of the core complex of photosystem II (PSII). PSII is a light-driven water:plastoquinone oxidoreductase that uses light energy to abstract electrons from H(2)O, generating O(2) and a proton gradient subsequently used for ATP formation. It consists of a core antenna complex that captures photons, and an electron transfer chain that converts photonic excitation into a charge separation. The chain is Photosystem II reaction center protein J from Trichormus variabilis (strain ATCC 29413 / PCC 7937) (Anabaena variabilis).